The primary structure comprises 394 residues: Acid ceramidase (394 aa).

The signal sequence occupies residues methionine 1–alanine 18. Cysteine 30 and cysteine 339 are joined by a disulfide. Residue cysteine 142 is the Nucleophile of the active site. Residues asparagine 172, asparagine 194, asparagine 258, asparagine 341, and asparagine 347 are each glycosylated (N-linked (GlcNAc...) asparagine). A disulfide bridge links cysteine 387 with cysteine 391.

It belongs to the acid ceramidase family. In terms of assembly, heterodimer; disulfide-linked. The heterodimer is composed of the disulfide-linked alpha and beta chains produced by autocatalytic cleavage of the precursor. Post-translationally, N-glycosylated. In terms of processing, proteolytically cleaved into two chains alpha and beta that remain associated via a disulfide bond. Cleavage gives rise to a conformation change that activates the enzyme. The same catalytic Cys residue mediates the autoproteolytic cleavage and subsequent hydrolysis of lipid substrates. The beta chain may undergo an additional C-terminal processing. As to expression, widely expressed.

Its subcellular location is the lysosome. It is found in the secreted. It carries out the reaction an N-acylsphing-4-enine + H2O = sphing-4-enine + a fatty acid. The enzyme catalyses N-dodecanoylsphing-4-enine + H2O = dodecanoate + sphing-4-enine. It catalyses the reaction N-(9Z-octadecenoyl)-sphing-4-enine + H2O = sphing-4-enine + (9Z)-octadecenoate. The catalysed reaction is N-tetradecanoylsphing-4-enine + H2O = tetradecanoate + sphing-4-enine. It carries out the reaction N-hexadecanoylsphing-4-enine + H2O = sphing-4-enine + hexadecanoate. The enzyme catalyses N-octadecanoylsphing-4-enine + H2O = sphing-4-enine + octadecanoate. It catalyses the reaction N-dodecanoyl-(4R)-hydroxysphinganine + H2O = (4R)-hydroxysphinganine + dodecanoate. The catalysed reaction is N-(dodecanoyl)-sphinganine + H2O = dodecanoate + sphinganine. It carries out the reaction N-(acetyl)-sphing-4-enine + H2O = sphing-4-enine + acetate. The enzyme catalyses N-(hexanoyl)sphing-4-enine + H2O = hexanoate + sphing-4-enine. It catalyses the reaction N-octanoylsphing-4-enine + H2O = octanoate + sphing-4-enine. The catalysed reaction is N-dodecanoylethanolamine + H2O = dodecanoate + ethanolamine. It functions in the pathway lipid metabolism; sphingolipid metabolism. Lysosomal ceramidase that hydrolyzes sphingolipid ceramides into sphingosine and free fatty acids at acidic pH. Ceramides, sphingosine, and its phosphorylated form sphingosine-1-phosphate are bioactive lipids that mediate cellular signaling pathways regulating several biological processes including cell proliferation, apoptosis and differentiation. Has a higher catalytic efficiency towards C12-ceramides versus other ceramides. Also catalyzes the reverse reaction allowing the synthesis of ceramides from fatty acids and sphingosine. For the reverse synthetic reaction, the natural sphingosine D-erythro isomer is more efficiently utilized as a substrate compared to D-erythro-dihydrosphingosine and D-erythro-phytosphingosine, while the fatty acids with chain lengths of 12 or 14 carbons are the most efficiently used. Also has an N-acylethanolamine hydrolase activity. By regulating the levels of ceramides, sphingosine and sphingosine-1-phosphate in the epidermis, mediates the calcium-induced differentiation of epidermal keratinocytes. Also indirectly regulates tumor necrosis factor/TNF-induced apoptosis. By regulating the intracellular balance between ceramides and sphingosine, in adrenocortical cells, probably also acts as a regulator of steroidogenesis. This is Acid ceramidase from Mus musculus (Mouse).